Reading from the N-terminus, the 98-residue chain is Integration host factor subunit beta (98 aa).

Belongs to the bacterial histone-like protein family. As to quaternary structure, heterodimer of an alpha and a beta chain.

Functionally, this protein is one of the two subunits of integration host factor, a specific DNA-binding protein that functions in genetic recombination as well as in transcriptional and translational control. In Pseudomonas fluorescens (strain SBW25), this protein is Integration host factor subunit beta.